A 356-amino-acid polypeptide reads, in one-letter code: UDP-3-O-acylglucosamine N-acyltransferase (356 aa).

His242 (proton acceptor) is an active-site residue.

Belongs to the transferase hexapeptide repeat family. LpxD subfamily. Homotrimer.

The catalysed reaction is a UDP-3-O-[(3R)-3-hydroxyacyl]-alpha-D-glucosamine + a (3R)-hydroxyacyl-[ACP] = a UDP-2-N,3-O-bis[(3R)-3-hydroxyacyl]-alpha-D-glucosamine + holo-[ACP] + H(+). It functions in the pathway bacterial outer membrane biogenesis; LPS lipid A biosynthesis. In terms of biological role, catalyzes the N-acylation of UDP-3-O-acylglucosamine using 3-hydroxyacyl-ACP as the acyl donor. Is involved in the biosynthesis of lipid A, a phosphorylated glycolipid that anchors the lipopolysaccharide to the outer membrane of the cell. This chain is UDP-3-O-acylglucosamine N-acyltransferase, found in Acinetobacter baylyi (strain ATCC 33305 / BD413 / ADP1).